The primary structure comprises 323 residues: Rhazimal reductase 2 (323 aa).

D53 serves as a coordination point for NADP(+). Y58 serves as the catalytic Proton donor. Residues 167–168 (SN), Q189, 215–220 (WSPLLS), and 289–297 (DQIQQIPQR) each bind NADP(+).

This sequence belongs to the aldo/keto reductase family. Monomer.

The enzyme catalyses rhazimol + NADP(+) = rhazimal + NADPH + 2 H(+). It participates in alkaloid biosynthesis. Functionally, oxidoreductase involved in the biosynthesis of akuammilan monoterpene indole alkaloids (MIAs) natural products, components with various biological properties such as antidiabetic, antibacterial, anti-inflammatory, anticancer, and antimalarial activities. Catalyzes the conversion of rhazimal to rhazimol. This chain is Rhazimal reductase 2, found in Alstonia scholaris (Dogbane).